A 283-amino-acid chain; its full sequence is ATP phosphoribosyltransferase (283 aa).

The protein belongs to the ATP phosphoribosyltransferase family. Long subfamily. Mg(2+) is required as a cofactor.

The protein resides in the cytoplasm. The enzyme catalyses 1-(5-phospho-beta-D-ribosyl)-ATP + diphosphate = 5-phospho-alpha-D-ribose 1-diphosphate + ATP. It participates in amino-acid biosynthesis; L-histidine biosynthesis; L-histidine from 5-phospho-alpha-D-ribose 1-diphosphate: step 1/9. With respect to regulation, feedback inhibited by histidine. Its function is as follows. Catalyzes the condensation of ATP and 5-phosphoribose 1-diphosphate to form N'-(5'-phosphoribosyl)-ATP (PR-ATP). Has a crucial role in the pathway because the rate of histidine biosynthesis seems to be controlled primarily by regulation of HisG enzymatic activity. The polypeptide is ATP phosphoribosyltransferase (Rhodococcus jostii (strain RHA1)).